A 919-amino-acid chain; its full sequence is Chaperone protein ClpC2, chloroplastic (919 aa).

The transit peptide at 1-54 directs the protein to the chloroplast; it reads MAGTLLQPVALGTTFAGRVSGQRWKSHGTRRPPSMLAMSLSRPVKMAAFVGLRS. One can recognise a Clp R domain in the interval 89–231; it reads FERFTEKAIK…RTQVIRMIGE (143 aa). Repeat stretches follow at residues 92 to 157 and 167 to 231; these read FTEK…IGRG and FTPR…MIGE. Residues 252-499 form an i region; sequence LEEYGTNLTK…RVRLRHAQVP (248 aa). ATP is bound at residue 297–304; that stretch reads GEPGVGKT. One can recognise a UVR domain in the interval 506-541; sequence DKELKQITKDKNEAVRSQDFEKAGELRDREMELKAQ. An II region spans residues 566–757; the sequence is VNEADIQHIV…LLIMTSNVGS (192 aa). Residue 640 to 647 coordinates ATP; the sequence is GPTGVGKS.

Belongs to the ClpA/ClpB family. ClpC subfamily.

It localises to the plastid. It is found in the chloroplast. In terms of biological role, molecular chaperone that may interact with a ClpP-like protease involved in degradation of denatured proteins in the chloroplast. The polypeptide is Chaperone protein ClpC2, chloroplastic (CLPC2) (Oryza sativa subsp. japonica (Rice)).